Reading from the N-terminus, the 413-residue chain is MGYYNNVFDECNDQTDIGRVIRDGREVILQAYNWESHKYDWWRNLDGKVPDIAKSGFTSAWLPPPSQSLAPEGYLPQDLYSLNSAYGSEHLLKSLLRKMKQYKVRAMADIVINHRVGTTRGHGGMYNRYDGISLPWDEHAVTSCTGGLGNRSTGDNFNGVPNVDHTQHFVRKDIIGWLRWLRNTVGFQDFRFDFARGYSANYVKEYIGAAKPLFSVGECWDSCNYNGHGLDYNQDSHRQRIISWIDATGQISAAFDFTTKGILQEAVKGQYWRLCDAQGKPPGVMGWWPSRAVTFLDNHDTGSTQAHWPFPSHHVMEGYAYILTHPGIPCVFYDHFYDWGSSIHDQIVKLIDIRRRQDIHSRSTVRVLKAESNLYAAIVGEKICMKLGDGSWCPSGRDWTLATSGHRYAVWHK.

Residues 74 to 75 (YL) and 191 to 196 (RFDFAR) contribute to the substrate site. Catalysis depends on Asp193, which acts as the Nucleophile. Glu218 serves as the catalytic Proton donor. Residues Trp220, Ser222, Gln239, Asp246, Lys280, 286–288 (GWW), His299, Gln305, Lys386, and Trp411 contribute to the substrate site.

Belongs to the glycosyl hydrolase 13 family. Requires Ca(2+) as cofactor. In terms of tissue distribution, expressed in developing siliques.

The protein resides in the cytoplasm. It is found in the cytosol. It carries out the reaction Endohydrolysis of (1-&gt;4)-alpha-D-glucosidic linkages in polysaccharides containing three or more (1-&gt;4)-alpha-linked D-glucose units.. Probable alpha-amylase that does not seem to be required for breakdown of transitory starch in leaves. This chain is Probable alpha-amylase 2 (AMY2), found in Arabidopsis thaliana (Mouse-ear cress).